A 92-amino-acid chain; its full sequence is Small ribosomal subunit protein bS20 (92 aa).

Belongs to the bacterial ribosomal protein bS20 family.

Its function is as follows. Binds directly to 16S ribosomal RNA. The polypeptide is Small ribosomal subunit protein bS20 (Methylacidiphilum infernorum (isolate V4) (Methylokorus infernorum (strain V4))).